Here is a 136-residue protein sequence, read N- to C-terminus: Small ribosomal subunit protein uS8c (136 aa).

This sequence belongs to the universal ribosomal protein uS8 family. In terms of assembly, part of the 30S ribosomal subunit.

It is found in the plastid. It localises to the chloroplast. In terms of biological role, one of the primary rRNA binding proteins, it binds directly to 16S rRNA central domain where it helps coordinate assembly of the platform of the 30S subunit. The protein is Small ribosomal subunit protein uS8c (rps8) of Saccharum hybrid (Sugarcane).